A 218-amino-acid polypeptide reads, in one-letter code: Thiopurine S-methyltransferase (218 aa).

Residues Trp10, Leu45, Glu66, and Arg123 each contribute to the S-adenosyl-L-methionine site.

This sequence belongs to the class I-like SAM-binding methyltransferase superfamily. TPMT family.

The protein resides in the cytoplasm. It carries out the reaction S-adenosyl-L-methionine + a thiopurine = S-adenosyl-L-homocysteine + a thiopurine S-methylether.. The sequence is that of Thiopurine S-methyltransferase from Shewanella baltica (strain OS155 / ATCC BAA-1091).